Consider the following 346-residue polypeptide: UDP-N-acetylenolpyruvoylglucosamine reductase (346 aa).

In terms of domain architecture, FAD-binding PCMH-type spans 18 to 189 (LRAQARAFIA…VSVVFALKTH (172 aa)). The active site involves Arg165. The active-site Proton donor is the Ser240. Glu336 is an active-site residue.

It belongs to the MurB family. Requires FAD as cofactor.

The protein resides in the cytoplasm. The enzyme catalyses UDP-N-acetyl-alpha-D-muramate + NADP(+) = UDP-N-acetyl-3-O-(1-carboxyvinyl)-alpha-D-glucosamine + NADPH + H(+). The protein operates within cell wall biogenesis; peptidoglycan biosynthesis. Functionally, cell wall formation. The protein is UDP-N-acetylenolpyruvoylglucosamine reductase of Neisseria meningitidis serogroup C (strain 053442).